A 133-amino-acid chain; its full sequence is Sec-independent protein translocase protein TatB (133 aa).

A helical membrane pass occupies residues M1–G21. Residues E67–E133 form a disordered region. Polar residues predominate over residues G70–S84. Low complexity predominate over residues A97–E116.

The protein belongs to the TatB family. The Tat system comprises two distinct complexes: a TatABC complex, containing multiple copies of TatA, TatB and TatC subunits, and a separate TatA complex, containing only TatA subunits. Substrates initially bind to the TatABC complex, which probably triggers association of the separate TatA complex to form the active translocon.

It localises to the cell inner membrane. Part of the twin-arginine translocation (Tat) system that transports large folded proteins containing a characteristic twin-arginine motif in their signal peptide across membranes. Together with TatC, TatB is part of a receptor directly interacting with Tat signal peptides. TatB may form an oligomeric binding site that transiently accommodates folded Tat precursor proteins before their translocation. The chain is Sec-independent protein translocase protein TatB from Vibrio cholerae serotype O1 (strain ATCC 39315 / El Tor Inaba N16961).